The primary structure comprises 227 residues: Ornithine decarboxylase antizyme 1 (227 aa).

The disordered stretch occupies residues 20-50 (EGDKPSATVHATRTMPLLSLHSRGGRSSESS). The segment covering 36–50 (LLSLHSRGGRSSESS) has biased composition (low complexity).

Belongs to the ODC antizyme family. Interacts with ODC1 and thereby sterically blocks ODC homodimerization. Forms a ternary complex with PSMB4 and OAZ1 before PSMB4 is incorporated into the 20S proteasome. Interacts with AZIN2; this interaction disrupts the interaction between the antizyme and ODC1. Interacts with FAM171A1.

Ornithine decarboxylase (ODC) antizyme protein that negatively regulates ODC activity and intracellular polyamine biosynthesis and uptake in response to increased intracellular polyamine levels. Binds to ODC monomers, inhibiting the assembly of the functional ODC homodimer, and targets the monomers for ubiquitin-independent proteolytic destruction by the 26S proteasome. Triggers ODC degradation by inducing the exposure of a cryptic proteasome-interacting surface of ODC. Stabilizes AZIN2 by interfering with its ubiquitination. Also inhibits cellular uptake of polyamines by inactivating the polyamine uptake transporter. SMAD1/OAZ1/PSMB4 complex mediates the degradation of the CREBBP/EP300 repressor SNIP1. Involved in the translocation of AZIN2 from ER-Golgi intermediate compartment (ERGIC) to the cytosol. This is Ornithine decarboxylase antizyme 1 (OAZ1) from Bos taurus (Bovine).